Reading from the N-terminus, the 327-residue chain is ATPase ASNA1 homolog (327 aa).

K26 to T33 contacts ATP. D57 is an active-site residue. The ATP site is built by E238 and N265. 2 residues coordinate Zn(2+): C274 and C277.

It belongs to the arsA ATPase family. In terms of assembly, homodimer.

Its subcellular location is the cytoplasm. The protein resides in the endoplasmic reticulum. In terms of biological role, ATPase required for the post-translational delivery of tail-anchored (TA) proteins to the endoplasmic reticulum. Recognizes and selectively binds the transmembrane domain of TA proteins in the cytosol. This complex then targets to the endoplasmic reticulum by membrane-bound receptors, where the tail-anchored protein is released for insertion. This process is regulated by ATP binding and hydrolysis. ATP binding drives the homodimer towards the closed dimer state, facilitating recognition of newly synthesized TA membrane proteins. ATP hydrolysis is required for insertion. Subsequently, the homodimer reverts towards the open dimer state, lowering its affinity for the membrane-bound receptor, and returning it to the cytosol to initiate a new round of targeting. This is ATPase ASNA1 homolog from Entamoeba dispar (strain ATCC PRA-260 / SAW760).